Here is a 95-residue protein sequence, read N- to C-terminus: Small ribosomal subunit protein uS19 (95 aa).

Belongs to the universal ribosomal protein uS19 family.

Functionally, protein S19 forms a complex with S13 that binds strongly to the 16S ribosomal RNA. The protein is Small ribosomal subunit protein uS19 of Clostridium kluyveri (strain NBRC 12016).